A 227-amino-acid chain; its full sequence is Ribose-5-phosphate isomerase A (227 aa).

Residues 26-29, 82-85, and 95-98 contribute to the substrate site; these read TGST, DGAD, and KGGG. Glutamate 104 acts as the Proton acceptor in catalysis. Lysine 122 lines the substrate pocket.

It belongs to the ribose 5-phosphate isomerase family. Homodimer.

It carries out the reaction aldehydo-D-ribose 5-phosphate = D-ribulose 5-phosphate. It participates in carbohydrate degradation; pentose phosphate pathway; D-ribose 5-phosphate from D-ribulose 5-phosphate (non-oxidative stage): step 1/1. Catalyzes the reversible conversion of ribose-5-phosphate to ribulose 5-phosphate. This is Ribose-5-phosphate isomerase A from Streptococcus equi subsp. zooepidemicus (strain H70).